A 258-amino-acid chain; its full sequence is UPF0246 protein CKO_03380 (258 aa).

Belongs to the UPF0246 family.

This Citrobacter koseri (strain ATCC BAA-895 / CDC 4225-83 / SGSC4696) protein is UPF0246 protein CKO_03380.